A 173-amino-acid chain; its full sequence is MNDLRYPIGQFTYKRPITEEMIDTWIQEIEDLPNELTKAIKDLDQKQLDTPYRVGGWTVRQVVHHVVDSHMNSYIRFKLALTEKNPTIKPYKEEKWAELPDSKLPVDVSLVMLESLHKRWVNLLYSLELEDLEKTFNHPETGETKLAVAIGLYAWHGRHHTAHITSLRKRLNW.

Zn(2+) is bound by residues H65, H156, and H160.

This sequence belongs to the metal hydrolase YfiT family. Homodimer. Zn(2+) serves as cofactor.

The protein localises to the cytoplasm. Possible metal-dependent hydrolase. The protein is Putative metal-dependent hydrolase BCE_2729 of Bacillus cereus (strain ATCC 10987 / NRS 248).